The sequence spans 141 residues: UPF0102 protein BRADO0179 (141 aa).

A disordered region spans residues 1-24 (MAETDRATDKPAGAPKPAKTASPE). Residues 10–19 (KPAGAPKPAK) show a composition bias toward low complexity.

The protein belongs to the UPF0102 family.

The chain is UPF0102 protein BRADO0179 from Bradyrhizobium sp. (strain ORS 278).